We begin with the raw amino-acid sequence, 391 residues long: Thioredoxin-interacting protein (391 aa).

Residue Lys-212 forms a Glycyl lysine isopeptide (Lys-Gly) (interchain with G-Cter in ubiquitin) linkage. Ser-361 bears the Phosphoserine mark.

It belongs to the arrestin family. In terms of assembly, homodimer; disulfide-linked. Interacts with TXN/thioredoxin through its redox-active site. Interacts with transcriptional repressors ZBTB16, ZBTB32 and HDAC1. Interacts with DDIT4. Post-translationally, ubiquitinated; undergoes heterotypic 'Lys-48'-/'Lys-63'-branched polyubiquitination catalyzed by ITCH and UBR5 resulting in proteasomal degradation. Deubiquitinated by USP5, leading to TXNIP stabilization.

It is found in the cytoplasm. It localises to the nucleus. May act as an oxidative stress mediator by inhibiting thioredoxin activity or by limiting its bioavailability. Interacts with COPS5 and restores COPS5-induced suppression of CDKN1B stability, blocking the COPS5-mediated translocation of CDKN1B from the nucleus to the cytoplasm. Functions as a transcriptional repressor, possibly by acting as a bridge molecule between transcription factors and corepressor complexes, and over-expression will induce G0/G1 cell cycle arrest. Required for the maturation of natural killer cells. Acts as a suppressor of tumor cell growth. Inhibits the proteasomal degradation of DDIT4, and thereby contributes to the inhibition of the mammalian target of rapamycin complex 1 (mTORC1). The chain is Thioredoxin-interacting protein (TXNIP) from Homo sapiens (Human).